We begin with the raw amino-acid sequence, 478 residues long: Oxidative stress-induced growth inhibitor 1 (478 aa).

The residue at position 12 (Ser12) is a Phosphoserine.

The protein belongs to the OKL38 family. Requires NADPH as cofactor.

The protein localises to the midbody. Its function is as follows. Monooxygenase catalytic activity. Involved in regulation of cytokinesis; promotes RHOA activity, probably acting locally at the midbody in late cytokinesis. Monooxygenase activity is involved in stabilizing transient structures between daughter cells, termed intercellular bridges, before abscission. Regulates differentiation and proliferation through the regulation of cell death. This chain is Oxidative stress-induced growth inhibitor 1, found in Mus musculus (Mouse).